A 336-amino-acid chain; its full sequence is Holliday junction branch migration complex subunit RuvB (336 aa).

The tract at residues serine 4–tyrosine 184 is large ATPase domain (RuvB-L). Residues isoleucine 23, arginine 24, glycine 65, lysine 68, threonine 69, threonine 70, glutamate 131–tyrosine 133, arginine 174, tyrosine 184, and arginine 221 contribute to the ATP site. Position 69 (threonine 69) interacts with Mg(2+). A small ATPAse domain (RuvB-S) region spans residues serine 185 to glutamate 255. Residues glutamine 258–glutamate 336 form a head domain (RuvB-H) region. Positions 313 and 318 each coordinate DNA.

It belongs to the RuvB family. As to quaternary structure, homohexamer. Forms an RuvA(8)-RuvB(12)-Holliday junction (HJ) complex. HJ DNA is sandwiched between 2 RuvA tetramers; dsDNA enters through RuvA and exits via RuvB. An RuvB hexamer assembles on each DNA strand where it exits the tetramer. Each RuvB hexamer is contacted by two RuvA subunits (via domain III) on 2 adjacent RuvB subunits; this complex drives branch migration. In the full resolvosome a probable DNA-RuvA(4)-RuvB(12)-RuvC(2) complex forms which resolves the HJ.

It is found in the cytoplasm. It catalyses the reaction ATP + H2O = ADP + phosphate + H(+). The RuvA-RuvB-RuvC complex processes Holliday junction (HJ) DNA during genetic recombination and DNA repair, while the RuvA-RuvB complex plays an important role in the rescue of blocked DNA replication forks via replication fork reversal (RFR). RuvA specifically binds to HJ cruciform DNA, conferring on it an open structure. The RuvB hexamer acts as an ATP-dependent pump, pulling dsDNA into and through the RuvAB complex. RuvB forms 2 homohexamers on either side of HJ DNA bound by 1 or 2 RuvA tetramers; 4 subunits per hexamer contact DNA at a time. Coordinated motions by a converter formed by DNA-disengaged RuvB subunits stimulates ATP hydrolysis and nucleotide exchange. Immobilization of the converter enables RuvB to convert the ATP-contained energy into a lever motion, pulling 2 nucleotides of DNA out of the RuvA tetramer per ATP hydrolyzed, thus driving DNA branch migration. The RuvB motors rotate together with the DNA substrate, which together with the progressing nucleotide cycle form the mechanistic basis for DNA recombination by continuous HJ branch migration. Branch migration allows RuvC to scan DNA until it finds its consensus sequence, where it cleaves and resolves cruciform DNA. The chain is Holliday junction branch migration complex subunit RuvB from Legionella pneumophila (strain Lens).